Reading from the N-terminus, the 534-residue chain is Putative fimbrium tip subunit Fim1C (534 aa).

The N-terminal stretch at 1–21 is a signal peptide; sequence MKQYKLMQVALLAILLFGWAG. A lipid anchor (N-palmitoyl cysteine) is attached at C22. C22 is lipidated: S-diacylglycerol cysteine. Positions 22–54 are excised as a propeptide; the sequence is CSQNEEEVPGNVRNGIVLNVTDTGIISNEPSTR.

This sequence belongs to the bacteroidetes fimbrillin superfamily. Mfa-like family. In terms of assembly, may be part of the fimbrial tip.

It is found in the fimbrium. It localises to the cell outer membrane. In terms of biological role, probably a component of the fimbrium tip. Fimbriae are filamentous appendages on the cell surface that mediate cell adhesion and biofilm formation. The protein is Putative fimbrium tip subunit Fim1C of Bacteroides ovatus (strain ATCC 8483 / DSM 1896 / JCM 5824 / BCRC 10623 / CCUG 4943 / NCTC 11153).